The primary structure comprises 322 residues: Methionyl-tRNA formyltransferase (322 aa).

113 to 116 (SLLP) contributes to the (6S)-5,6,7,8-tetrahydrofolate binding site.

It belongs to the Fmt family.

The enzyme catalyses L-methionyl-tRNA(fMet) + (6R)-10-formyltetrahydrofolate = N-formyl-L-methionyl-tRNA(fMet) + (6S)-5,6,7,8-tetrahydrofolate + H(+). Its function is as follows. Attaches a formyl group to the free amino group of methionyl-tRNA(fMet). The formyl group appears to play a dual role in the initiator identity of N-formylmethionyl-tRNA by promoting its recognition by IF2 and preventing the misappropriation of this tRNA by the elongation apparatus. The protein is Methionyl-tRNA formyltransferase of Bacteroides thetaiotaomicron (strain ATCC 29148 / DSM 2079 / JCM 5827 / CCUG 10774 / NCTC 10582 / VPI-5482 / E50).